The sequence spans 345 residues: Metal-dependent phosphohydrolase cns2 (345 aa).

Positions 70-171 constitute an HD domain; it reads RLEHSVGAFI…QLCADRLDYA (102 aa).

Interacts with cns1.

The protein localises to the lipid droplet. It participates in secondary metabolite biosynthesis. Functionally, metal-dependent phosphohydrolase; part of the gene cluster that mediates the biosynthesis of cordycepin (COR) and pentostatin (PTN), two adenosine analogs with related bioactivity profiles as both mimic adenosine and can inhibit some of the processes that are adenosine dependent. Within the pathway, cns2 catalyzes dephosphorylation of 3'-AMP to produce 2'-carbonyl-3'-deoxyadenosine (2'-C-3'-dA). The first step of cordycepin biosynthesis involves hydroxyl phosphorylation of the 3'-OH position on adenosine to produce adenosine-3'-monophosphate (3'-AMP), catalyzed by kinase activity of cns3. Next, 3'-AMP is dephosphorylated to 2'-carbonyl-3'-deoxyadenosine by cns2, which is finally converted to cordycepin (3'-deoxyadenosine) by the oxidoreductase cns1. This is Metal-dependent phosphohydrolase cns2 from Cordyceps militaris (strain CM01) (Caterpillar fungus).